Reading from the N-terminus, the 158-residue chain is NAD(P)H-quinone oxidoreductase subunit J, chloroplastic (158 aa).

Belongs to the complex I 30 kDa subunit family. NDH is composed of at least 16 different subunits, 5 of which are encoded in the nucleus.

The protein localises to the plastid. It localises to the chloroplast thylakoid membrane. The enzyme catalyses a plastoquinone + NADH + (n+1) H(+)(in) = a plastoquinol + NAD(+) + n H(+)(out). The catalysed reaction is a plastoquinone + NADPH + (n+1) H(+)(in) = a plastoquinol + NADP(+) + n H(+)(out). Its function is as follows. NDH shuttles electrons from NAD(P)H:plastoquinone, via FMN and iron-sulfur (Fe-S) centers, to quinones in the photosynthetic chain and possibly in a chloroplast respiratory chain. The immediate electron acceptor for the enzyme in this species is believed to be plastoquinone. Couples the redox reaction to proton translocation, and thus conserves the redox energy in a proton gradient. The protein is NAD(P)H-quinone oxidoreductase subunit J, chloroplastic of Chloranthus spicatus (Chulantree).